The primary structure comprises 896 residues: Zinc finger protein 574 (896 aa).

3 consecutive C2H2-type zinc fingers follow at residues 16–38 (YVCSECNQLYGSLEEVLMHQNSH), 76–98 (YQCLECGQLLMSPSQLLEHQELH), and 126–148 (YECVDCKALFASQELWLNHRQTH). Ser-164 bears the Phosphoserine mark. The segment at 214-236 (YKCSECSQLFQLPADFLEHQATH) adopts a C2H2-type 4 zinc-finger fold. Over residues 259–272 (VEVPVSQPEPVPSS) the composition is skewed to low complexity. Residues 259–303 (VEVPVSQPEPVPSSDHSYELRNGEALGRDRRGRRARRNNSGEPGG) are disordered. Residues 274-287 (HSYELRNGEALGRD) are compositionally biased toward basic and acidic residues. Phosphoserine is present on Ser-298. C2H2-type zinc fingers lie at residues 309–331 (LFCSACDQLFLSPHQLQQHLRSH), 336–358 (FKCPLCSRVFPSPSSLDQHLGDH), 364–386 (FLCVDCGLAFGTEALLLAHRRAH), and 392–413 (HSCPCGKTFVNLTKFLYHRRTH). The segment at 434-460 (FPEPAPAETGEPEAPEPPVAEESSAEP) is disordered. 6 consecutive C2H2-type zinc fingers follow at residues 466–489 (YRCLLCSREFGKALQLTRHQRFVH), 495–517 (HKCSICGKMFKKKSHVRNHLRTH), 523–545 (FPCPDCSKPFNSPANLARHRLTH), 551–573 (YRCGDCGKAFTQSSTLRQHRLVH), 579–601 (YRCQECGVRFHRPYRLLMHRYHH), and 607–630 (YKCRECPRSFLLRRLLEVHQLVAH). A C2H2-type 15; degenerate zinc finger spans residues 636 to 659 (HRCSSCGAAFPSSLRLREHRCAAA). The C2H2-type 16 zinc-finger motif lies at 667-689 (FECGTCGKKVGSAARLQAHEAAH). The disordered stretch occupies residues 687–733 (AAHAAAGPGEVLAKEPPAPRAPRAARTPITSPTTLGSAAPAAPAAPA). The segment covering 707–732 (APRAARTPITSPTTLGSAAPAAPAAP) has biased composition (low complexity). Phosphoserine is present on Ser-717. 4 C2H2-type zinc fingers span residues 738–760 (LECSECKKLFSTETSLQVHRRIH), 766–788 (YPCPDCGKAFRQSTHLKDHRRLH), 794–816 (FACEVCGKAFAISMRLAEHRRIH), and 822–844 (YSCPDCGKSYRSFSNLWKHRKTH). Arg-832 is modified (asymmetric dimethylarginine).

Belongs to the krueppel C2H2-type zinc-finger protein family.

The protein resides in the nucleus. Its function is as follows. May be involved in transcriptional regulation. This Bos taurus (Bovine) protein is Zinc finger protein 574 (ZNF574).